Here is a 199-residue protein sequence, read N- to C-terminus: MACNIPNERQRTMSTSGEALYEILGLHKGASNEEIKKTYRKLALKHHPDKNPDDPGAAEKFKEINNAHTILTDMSKRNIYDKYGSLGLYVAEQFGEENVNTYFMLSSWWAKTLFVIIGLLTGCYFCCCLCCCCNCCCGRCRPKSSMPGEDFYVSPEDLEEQIKTDMEQDMDFPVILQPTNANEKTQLIREGPRSYCTDS.

Phosphoserine occurs at positions 14 and 16. The 66-residue stretch at 19–84 (ALYEILGLHK…SKRNIYDKYG (66 aa)) folds into the J domain.

In terms of assembly, interacts with the chaperone complex consisting of HSC70 and SGTA. In terms of processing, palmitoylated.

The protein localises to the membrane. This chain is DnaJ homolog subfamily C member 5B (DNAJC5B), found in Sus scrofa (Pig).